The chain runs to 92 residues: Small ribosomal subunit protein uS19c (92 aa).

It belongs to the universal ribosomal protein uS19 family.

Its subcellular location is the plastid. The protein localises to the chloroplast. Its function is as follows. Protein S19 forms a complex with S13 that binds strongly to the 16S ribosomal RNA. This chain is Small ribosomal subunit protein uS19c, found in Gossypium barbadense (Sea Island cotton).